Reading from the N-terminus, the 1783-residue chain is Chitin synthase A (1783 aa).

N-linked (GlcNAc...) asparagine glycans are attached at residues Asn159, Asn637, Asn652, Asn664, and Asn669. Helical transmembrane passes span 745-765 (IWVAIVWFWTFWIPSPLLSFV) and 781-801 (LTLVWFIVLINAAIVFWIVAF). Residues Asn1014 and Asn1018 are each glycosylated (N-linked (GlcNAc...) asparagine). A helical membrane pass occupies residues 1051–1071 (IMLAMTIILCSVILVKFLAAL). Residue Asn1416 is glycosylated (N-linked (GlcNAc...) asparagine). 3 consecutive transmembrane segments (helical) span residues 1441–1461 (FVVFIDLFGTIILPATTIYLG), 1474–1494 (FPIISIIMLAAVYGLQALIFI), and 1502–1522 (IGWMIIYIMAFPIYSFALPIY). 2 N-linked (GlcNAc...) asparagine glycosylation sites follow: Asn1529 and Asn1617. The disordered stretch occupies residues 1659-1724 (THDINRGQTP…SFDFQRGNMQ (66 aa)). A compositionally biased stretch (polar residues) spans 1664 to 1688 (RGQTPFQDFPSSRPSVSNLRGQANP). Asn1695 carries an N-linked (GlcNAc...) asparagine glycan. One can recognise a DEK-C domain in the interval 1725 to 1781 (GPDDSMIIEAIQGVLREVDLDTVTKKQVRALVEQRLQTGLVGERRTFMDRQIDNELA).

This sequence belongs to the chitin synthase family. Class V subfamily.

Its subcellular location is the cell membrane. It catalyses the reaction [(1-&gt;4)-N-acetyl-beta-D-glucosaminyl](n) + UDP-N-acetyl-alpha-D-glucosamine = [(1-&gt;4)-N-acetyl-beta-D-glucosaminyl](n+1) + UDP + H(+). Functionally, polymerizes chitin, a structural polymer of the cell wall and septum, by transferring the sugar moiety of UDP-GlcNAc to the non-reducing end of the growing chitin polymer. Responsible for about 29% of the chitin in conidial walls, is essential for conidial wall strength in media with high water potential and contributes to strength of hyphal tips. This is Chitin synthase A from Colletotrichum graminicola (Maize anthracnose fungus).